We begin with the raw amino-acid sequence, 319 residues long: MATVQFFNQFPCKTRVQSSANSKPLSKPPSSLVPMSALTRRPSFPPGEFAVSRSDFRVRVIDAEDELDPETSEGGGSALLMAEEAIESVEETEVLKRSLVDSLYGTDRGLSASSETRAEIGDLITQLESKNPTPAPTDALFLLNGKWILAYTSFVGLFPLLSRGIVPLVKVDEISQTIDSDNFTVENSVLFAGPLATTSISTNAKFEIRSPKRVQIKFEEGVIGTPQLTDSIEIPEYVEFLGQKIDLTPIRGLLTSVQDTATSVARTISSQPPLKFSLPGDSAQSWLLTTYLDKDIRISRGDGGSVFVLIKEGSPLLNP.

The transit peptide at 1 to 59 (MATVQFFNQFPCKTRVQSSANSKPLSKPPSSLVPMSALTRRPSFPPGEFAVSRSDFRVR) directs the protein to the chloroplast. The segment at 17–39 (QSSANSKPLSKPPSSLVPMSALT) is disordered. Residues 18–36 (SSANSKPLSKPPSSLVPMS) are compositionally biased toward low complexity.

This sequence belongs to the PAP/fibrillin family. In terms of tissue distribution, expressed almost exclusively in petals. Very weak expression in all other organs.

Its subcellular location is the plastid. It is found in the chloroplast. Functionally, may stabilize the accumulated carotenoid structures. This is Plastid lipid-associated protein 2, chloroplastic (PAP2) from Brassica campestris (Field mustard).